The primary structure comprises 446 residues: Exodeoxyribonuclease 7 large subunit (446 aa).

The protein belongs to the XseA family. As to quaternary structure, heterooligomer composed of large and small subunits.

The protein resides in the cytoplasm. The enzyme catalyses Exonucleolytic cleavage in either 5'- to 3'- or 3'- to 5'-direction to yield nucleoside 5'-phosphates.. Bidirectionally degrades single-stranded DNA into large acid-insoluble oligonucleotides, which are then degraded further into small acid-soluble oligonucleotides. This chain is Exodeoxyribonuclease 7 large subunit, found in Streptococcus thermophilus (strain CNRZ 1066).